Reading from the N-terminus, the 653-residue chain is tRNA 5-methylaminomethyl-2-thiouridine biosynthesis bifunctional protein MnmC (653 aa).

The segment at 1–236 is tRNA (mnm(5)s(2)U34)-methyltransferase; sequence MPDRLVPATL…KFAMLVGEYA (236 aa). Positions 260–653 are FAD-dependent cmnm(5)s(2)U34 oxidoreductase; it reads IGAGLAGCAL…IRALRGRKLG (394 aa).

It in the N-terminal section; belongs to the methyltransferase superfamily. tRNA (mnm(5)s(2)U34)-methyltransferase family. In the C-terminal section; belongs to the DAO family. FAD serves as cofactor.

It is found in the cytoplasm. The catalysed reaction is 5-aminomethyl-2-thiouridine(34) in tRNA + S-adenosyl-L-methionine = 5-methylaminomethyl-2-thiouridine(34) in tRNA + S-adenosyl-L-homocysteine + H(+). Its function is as follows. Catalyzes the last two steps in the biosynthesis of 5-methylaminomethyl-2-thiouridine (mnm(5)s(2)U) at the wobble position (U34) in tRNA. Catalyzes the FAD-dependent demodification of cmnm(5)s(2)U34 to nm(5)s(2)U34, followed by the transfer of a methyl group from S-adenosyl-L-methionine to nm(5)s(2)U34, to form mnm(5)s(2)U34. The chain is tRNA 5-methylaminomethyl-2-thiouridine biosynthesis bifunctional protein MnmC from Burkholderia vietnamiensis (strain G4 / LMG 22486) (Burkholderia cepacia (strain R1808)).